A 339-amino-acid polypeptide reads, in one-letter code: Glycerol-3-phosphate dehydrogenase [NAD(P)+] (339 aa).

4 residues coordinate NADPH: Ser15, Tyr16, His36, and Lys110. Sn-glycerol 3-phosphate-binding residues include Lys110, Gly139, and Thr141. Ala143 is a binding site for NADPH. Sn-glycerol 3-phosphate is bound by residues Lys195, Asp248, Ser258, Arg259, and Asn260. Lys195 functions as the Proton acceptor in the catalytic mechanism. NADPH is bound at residue Arg259. NADPH-binding residues include Val283 and Glu285.

Belongs to the NAD-dependent glycerol-3-phosphate dehydrogenase family.

The protein localises to the cytoplasm. It catalyses the reaction sn-glycerol 3-phosphate + NAD(+) = dihydroxyacetone phosphate + NADH + H(+). It carries out the reaction sn-glycerol 3-phosphate + NADP(+) = dihydroxyacetone phosphate + NADPH + H(+). Its pathway is membrane lipid metabolism; glycerophospholipid metabolism. Catalyzes the reduction of the glycolytic intermediate dihydroxyacetone phosphate (DHAP) to sn-glycerol 3-phosphate (G3P), the key precursor for phospholipid synthesis. The protein is Glycerol-3-phosphate dehydrogenase [NAD(P)+] of Escherichia fergusonii (strain ATCC 35469 / DSM 13698 / CCUG 18766 / IAM 14443 / JCM 21226 / LMG 7866 / NBRC 102419 / NCTC 12128 / CDC 0568-73).